Reading from the N-terminus, the 245-residue chain is Probable phosphatase YcdX (245 aa).

Zn(2+) is bound by residues His-7, His-9, His-15, His-40, Glu-73, His-101, His-131, Asp-192, and His-194.

The protein belongs to the PHP family. Homotrimer. Zn(2+) serves as cofactor.

The protein is Probable phosphatase YcdX of Salmonella arizonae (strain ATCC BAA-731 / CDC346-86 / RSK2980).